The following is a 529-amino-acid chain: Nuclear protein localization protein 4 homolog 1 (529 aa).

The MPN domain occupies 129-266; it reads IQIENQELVN…ITEYSMDRHY (138 aa). A RanBP2-type zinc finger spans residues 499–529; the sequence is SGGAVWNCGHCTFQNEAARQDCSMCGLPAAD.

The protein belongs to the NPL4 family. Forms a complex composed of ubxn-3, ufd-1, npl-4.1 and cdc-48.1; within the complex, interacts with ufd-1 and ubxn-3. Interacts with ufd-1. Interacts with elc-1/elongin C; the interaction may mediate the interaction between the npl-4-ufd-1-cdc-48 complex and the E3 ubiquitin ligase cul-2 complex.

The protein resides in the cytoplasm. Its subcellular location is the nucleus. In association with ufd-1 and ATPase cdc-48.1 and/or cdc-48.2, involved in the cytoplasmic elimination of misfolded proteins exported from the ER. This pathway, known as ERAD, prevents the activation of the unfolded protein response (UPR) caused by the accumulation of misfolded proteins in the ER. During S phase and in association with ufd-1, cdc-48.1 and/or cdc-48.2 and ubxn-3, ensures the degradation of DNA licensing factor cdt-1 after the initiation of DNA replication and thus the disassembly of the DNA replication CGM helicase complex by promoting the dissociation from chromatin of several of its components including cdc-45 and sld-5. Regulates ubxn-3 nuclear localization during S phase. The sequence is that of Nuclear protein localization protein 4 homolog 1 from Caenorhabditis elegans.